Here is a 445-residue protein sequence, read N- to C-terminus: UNC93-like protein MFSD11 (445 aa).

Residues 8 to 28 form a helical membrane-spanning segment; that stretch reads LLNIVILGVGFMFMFTAFQTS. Asparagine 40 carries an N-linked (GlcNAc...) asparagine glycan. 4 helical membrane passes run 52–72, 74–94, 98–118, and 138–158; these read LAII…VIAV, GCQM…AMFI, TWSF…LWTA, and IFWA…YLAW. An N-linked (GlcNAc...) asparagine glycan is attached at asparagine 163. 7 helical membrane-spanning segments follow: residues 170-190, 239-259, 277-297, 309-329, 343-363, 385-405, and 415-435; these read RTVF…FFLI, MLLL…YSGV, LIGL…GLFG, PVVI…YLYM, LSAF…LLGL, APAF…AFFY, and LLIL…VEWG.

It belongs to the unc-93 family.

It is found in the membrane. The sequence is that of UNC93-like protein MFSD11 (mfsd11) from Xenopus laevis (African clawed frog).